Consider the following 103-residue polypeptide: Large ribosomal subunit protein bL21 (103 aa).

This sequence belongs to the bacterial ribosomal protein bL21 family. In terms of assembly, part of the 50S ribosomal subunit. Contacts protein L20.

This protein binds to 23S rRNA in the presence of protein L20. The protein is Large ribosomal subunit protein bL21 of Heliobacterium modesticaldum (strain ATCC 51547 / Ice1).